The following is a 258-amino-acid chain: TLC domain-containing protein 4 A (258 aa).

7 consecutive transmembrane segments (helical) span residues 8 to 28, 49 to 71, 92 to 112, 118 to 138, 144 to 164, 170 to 190, and 217 to 237; these read YLIS…YIWI, IEWT…SCYC, FILK…IIYY, WPII…IGLY, LTLL…MKWF, LENH…FIFI, and IIFF…YLVI. The 200-residue stretch at 46–245 folds into the TLC domain; sequence SSKIEWTNKI…VIKGILKHLS (200 aa).

It belongs to the TLCD4 family.

Its subcellular location is the membrane. In Dictyostelium discoideum (Social amoeba), this protein is TLC domain-containing protein 4 A (tlcd4a).